The primary structure comprises 145 residues: D-aminoacyl-tRNA deacylase (145 aa).

The Gly-cisPro motif, important for rejection of L-amino acids signature appears at Gly137–Pro138.

This sequence belongs to the DTD family. In terms of assembly, homodimer.

It localises to the cytoplasm. It catalyses the reaction glycyl-tRNA(Ala) + H2O = tRNA(Ala) + glycine + H(+). The catalysed reaction is a D-aminoacyl-tRNA + H2O = a tRNA + a D-alpha-amino acid + H(+). An aminoacyl-tRNA editing enzyme that deacylates mischarged D-aminoacyl-tRNAs. Also deacylates mischarged glycyl-tRNA(Ala), protecting cells against glycine mischarging by AlaRS. Acts via tRNA-based rather than protein-based catalysis; rejects L-amino acids rather than detecting D-amino acids in the active site. By recycling D-aminoacyl-tRNA to D-amino acids and free tRNA molecules, this enzyme counteracts the toxicity associated with the formation of D-aminoacyl-tRNA entities in vivo and helps enforce protein L-homochirality. The protein is D-aminoacyl-tRNA deacylase of Shewanella pealeana (strain ATCC 700345 / ANG-SQ1).